We begin with the raw amino-acid sequence, 423 residues long: Glucose-1-phosphate adenylyltransferase (423 aa).

Residues tyrosine 108, glycine 173, 188 to 189 (EK), and serine 207 contribute to the alpha-D-glucose 1-phosphate site.

This sequence belongs to the bacterial/plant glucose-1-phosphate adenylyltransferase family. Homotetramer.

It carries out the reaction alpha-D-glucose 1-phosphate + ATP + H(+) = ADP-alpha-D-glucose + diphosphate. It participates in glycan biosynthesis; glycogen biosynthesis. In terms of biological role, involved in the biosynthesis of ADP-glucose, a building block required for the elongation reactions to produce glycogen. Catalyzes the reaction between ATP and alpha-D-glucose 1-phosphate (G1P) to produce pyrophosphate and ADP-Glc. The sequence is that of Glucose-1-phosphate adenylyltransferase from Francisella tularensis subsp. mediasiatica (strain FSC147).